An 827-amino-acid chain; its full sequence is MIPLTSELVAIGKTATDKADAIAQAVDLLTAAGKIDPRYGQSMMGREAVANTFLGNGIAIPHGLPQDRDLIHDTAIAVVQLPAGVEWAPGDTARLVVAIAAKSDEHLQVLSNLTDVLGDEAEAERLATTLDAAVIVARLTGAAAPVAAPAETPADFAQGIDVVVTGAHGLHARPATTLVDLAKGFAAEIRIRNGAKVANGKSLISLLNLGAAQGAALRISAEGADATAALAAIAAAFEAGLEDEEDTGAAAPEAATPGLTGAGASMASYEGRTLVGISSSPGYALAPVFRFARDEVVFDTDAADAAFETDRLDTALQTAWHELEELHDEVWKTSGPARAAIFRAHQEFLHDPEMVAEAKALIGQGRSAGFAWHRVFSDRADMLGAMKDAVLSGRAIDLRDAGQRVLQHLGRVRTGETHLPTAPCILLADDLTPSDTARLDPALVRGLATAQGGPTSHTSIIARALDIPAVAGVGPRLLDLATGTPVLLDGGAGVIVVAPTEADKARAETAMAALTAQRELEARERYKPALTVDGARVEVVANISDVAEAIASVEAGAEGVGLLRTEFLFVNREAPPGEDEQLAIYAAMLSALNGLPIIIRTLDVGGDKEIPYLRMPVEQNPFLGERGIRFCLSHEDLFRTQLRAIYRASAGGQVRIMFPMIAMIEELETARRIAEEVRLEVGAAPVEIGIMIEIPSAVMMAPELAKRVDFFSIGTNDLTQYALAMDRMHPVLAKQADGLHPAVLRLIDSTVRAAEAARIWVGACGGIAGDPVGAAVLSGLGVRELSVSIPAVAGIKAQLRHSAMAENRDLARRALACTTAAEVRGLK.

Positions 2–142 (IPLTSELVAI…AVIVARLTGA (141 aa)) constitute a PTS EIIA type-2 domain. His62 functions as the Tele-phosphohistidine intermediate; for EIIA activity in the catalytic mechanism. His62 is subject to Phosphohistidine; by HPr. The HPr domain occupies 157–245 (AQGIDVVVTG…AFEAGLEDEE (89 aa)). His171 serves as the catalytic Pros-phosphohistidine intermediate; for HPr activity. His171 carries the post-translational modification Phosphohistidine; by EI. A PTS EI region spans residues 270-827 (EGRTLVGISS…TTAAEVRGLK (558 aa)). The active-site Tele-phosphohistidine intermediate; for PTS EI activity is the His457. Phosphohistidine; by autocatalysis is present on His457. Residues Arg564 and Arg600 each coordinate phosphoenolpyruvate. 2 residues coordinate Mg(2+): Glu693 and Asp717. Phosphoenolpyruvate-binding positions include 716-717 (ND) and Arg727. The active-site Proton donor is the Cys764.

Belongs to the PEP-utilizing enzyme family. Requires Mg(2+) as cofactor.

It is found in the cytoplasm. The enzyme catalyses L-histidyl-[protein] + phosphoenolpyruvate = N(pros)-phospho-L-histidyl-[protein] + pyruvate. The phosphoenolpyruvate-dependent sugar phosphotransferase system (sugar PTS), a major carbohydrate active transport system, catalyzes the phosphorylation of incoming sugar substrates concomitantly with their translocation across the cell membrane. The enzyme II FruAB PTS system is involved in fructose transport. This is Multiphosphoryl transfer protein from Rhodobacter capsulatus (Rhodopseudomonas capsulata).